A 108-amino-acid chain; its full sequence is Immunoglobulin kappa variable 11-125 (108 aa).

The interval aspartate 1–cysteine 23 is framework-1. Cysteine 23 and cysteine 88 are disulfide-bonded. Residues glutamine 24 to asparagine 34 form a complementarity-determining-1 region. A framework-2 region spans residues tryptophan 35–tyrosine 49. Residues glycine 50–aspartate 56 are complementarity-determining-2. A framework-3 region spans residues glycine 57–cysteine 88. The segment at leucine 89–threonine 97 is complementarity-determining-3. The tract at residues phenylalanine 98 to arginine 108 is framework-4.

The protein is Immunoglobulin kappa variable 11-125 of Mus musculus (Mouse).